Reading from the N-terminus, the 169-residue chain is uncharacterized protein (169 aa).

This is an uncharacterized protein from Buchnera aphidicola subsp. Acyrthosiphon pisum (strain APS) (Acyrthosiphon pisum symbiotic bacterium).